Consider the following 162-residue polypeptide: MRLSFILAATLTGLLACATASDSEKIIRISNEQVLSDRQLLDTVVNDNEKRFLRAYNDAEDDSEDPKNVKNTVDAKPADESEDSELSEEERFSLIQMSNQPRYYWWFQHEMTPRDVRRALGLRAGSIKLVKRSIYRGYVKYYNKHCSYYENRKKDFCKAKEY.

Residues 1-20 (MRLSFILAATLTGLLACATA) form the signal peptide. The RxLR-dEER motif lies at 51-91 (RFLRAYNDAEDDSEDPKNVKNTVDAKPADESEDSELSEEER). Residues 56–88 (YNDAEDDSEDPKNVKNTVDAKPADESEDSELSE) are disordered.

This sequence belongs to the RxLR effector family.

The protein localises to the secreted. It localises to the host cytoplasm. It is found in the host nucleus. The protein resides in the host nucleolus. Effector that enhances P.infestans colonization of Nicotiana benthamiana leaves. This Phytophthora infestans (strain T30-4) (Potato late blight agent) protein is RxLR effector protein PITG_06094.